We begin with the raw amino-acid sequence, 400 residues long: MFNTNTSNISTNVYGLSQKTRALSHITAEADVNRFLVGTTALREENEIALLEAKEGEGVRCLSIFPHPKEIHSITSCPFDSSLFFSVYNTSGGGNNNSNNTNNNDNTNNNTNNNDFKSSLWRINESMDSIEELFELKGHTGIIKPILCDPSGSNNFIISLDDSNIRLWSKIDDQNEPTVIKQFGNLSKLSVGSINPNISNQLATANDVNIKGWDFRNAKETFSMDKAHSEQIRDIDFNPNKPYYLLSAGDDCKLKIWDTRQTRDPVKIFSGHNHWIWSAKFNRYHDQLIITSSSDNTVKLWNLYSLSSAFNSENNISNSNEQQHSQQPNEQQPQQPPQPVKQKKNKRNEDQLIKTYEEHEDSVYNISWSSSNFLFASLSYDGRFVVNNVPKEYSDILSYI.

The tract at residues 95 to 114 is disordered; the sequence is NNNSNNTNNNDNTNNNTNNN. Residues 96–114 are compositionally biased toward low complexity; that stretch reads NNSNNTNNNDNTNNNTNNN. WD repeat units lie at residues 138-178, 227-267, and 271-311; these read GHTG…NEPT, AHSE…DPVK, and GHNH…SAFN. A compositionally biased stretch (low complexity) spans 314–333; the sequence is NNISNSNEQQHSQQPNEQQP. The disordered stretch occupies residues 314–348; the sequence is NNISNSNEQQHSQQPNEQQPQQPPQPVKQKKNKRN. The stretch at 358–397 is one WD 4 repeat; that stretch reads EHEDSVYNISWSSSNFLFASLSYDGRFVVNNVPKEYSDIL.

The protein belongs to the WD repeat EIPR1 family.

This chain is EARP-interacting protein homolog, found in Dictyostelium discoideum (Social amoeba).